The following is a 114-amino-acid chain: uncharacterized protein (114 aa).

Residues I6–S114 enclose the HIT domain.

This is an uncharacterized protein from Buchnera aphidicola subsp. Acyrthosiphon pisum (strain APS) (Acyrthosiphon pisum symbiotic bacterium).